The sequence spans 505 residues: Alkylglycerol monooxygenase (505 aa).

A run of 2 helical transmembrane segments spans residues 56-76 and 104-124; these read VSAW…ISGH and AVAI…ELPW. A Fatty acid hydroxylase domain is found at 130-262; sequence WIFCLFFQDF…FIIWDKMFNT (133 aa). A Histidine box-1 motif is present at residues 145–149; sequence HRAVH. Residues 158-162 carry the Histidine box-2 motif; sequence HTIHH. The Histidine box-3 motif lies at 234 to 238; the sequence is HRVHH. 4 helical membrane-spanning segments follow: residues 366–386, 396–416, 430–450, and 452–472; these read ILVK…FFHF, LDCT…GAFF, CCGV…AGTH, and LFVI…VLVE.

It belongs to the sterol desaturase family. TMEM195 subfamily. Fe cation serves as cofactor.

The protein resides in the endoplasmic reticulum membrane. The enzyme catalyses 1-O-(1,2-saturated-alkyl)-sn-glycerol + (6R)-L-erythro-5,6,7,8-tetrahydrobiopterin + O2 = a 1-(1-hydroxyalkyl)-sn-glycerol + (6R)-L-erythro-6,7-dihydrobiopterin + H2O. Glyceryl-ether monooxygenase that cleaves the O-alkyl bond of ether lipids. This is Alkylglycerol monooxygenase from Caenorhabditis elegans.